We begin with the raw amino-acid sequence, 166 residues long: Large ribosomal subunit protein uL10 (166 aa).

It belongs to the universal ribosomal protein uL10 family. Part of the ribosomal stalk of the 50S ribosomal subunit. The N-terminus interacts with L11 and the large rRNA to form the base of the stalk. The C-terminus forms an elongated spine to which L12 dimers bind in a sequential fashion forming a multimeric L10(L12)X complex.

Its function is as follows. Forms part of the ribosomal stalk, playing a central role in the interaction of the ribosome with GTP-bound translation factors. The protein is Large ribosomal subunit protein uL10 of Pseudomonas putida (strain W619).